A 334-amino-acid polypeptide reads, in one-letter code: UDP-N-acetylenolpyruvoylglucosamine reductase (334 aa).

Residues 16-186 (INVFAKKIII…LSVGIKLPKT (171 aa)) enclose the FAD-binding PCMH-type domain. The active site involves arginine 162. The Proton donor role is filled by serine 232. Glutamate 329 is an active-site residue.

It belongs to the MurB family. The cofactor is FAD.

Its subcellular location is the cytoplasm. The enzyme catalyses UDP-N-acetyl-alpha-D-muramate + NADP(+) = UDP-N-acetyl-3-O-(1-carboxyvinyl)-alpha-D-glucosamine + NADPH + H(+). It participates in cell wall biogenesis; peptidoglycan biosynthesis. Its function is as follows. Cell wall formation. This chain is UDP-N-acetylenolpyruvoylglucosamine reductase, found in Buchnera aphidicola subsp. Baizongia pistaciae (strain Bp).